A 134-amino-acid polypeptide reads, in one-letter code: MGKDTIADIITSIRNADMNRKGTVRIESTNITESIVKILLREGFIENVRKHRENNQYFLILTLRHRRNKKESYKTILNLKRISRPGLRIYSNSQRIPRILGGIGIVILSTSQGIMTDREARLKRIGGEILCYIW.

Belongs to the universal ribosomal protein uS8 family. As to quaternary structure, part of the 30S ribosomal subunit.

The protein resides in the plastid. Its subcellular location is the chloroplast. Functionally, one of the primary rRNA binding proteins, it binds directly to 16S rRNA central domain where it helps coordinate assembly of the platform of the 30S subunit. The protein is Small ribosomal subunit protein uS8c (rps8) of Arabis hirsuta (Hairy rock-cress).